Reading from the N-terminus, the 273-residue chain is 2,3,4,5-tetrahydropyridine-2,6-dicarboxylate N-succinyltransferase (273 aa).

The substrate site is built by arginine 104 and aspartate 141.

This sequence belongs to the transferase hexapeptide repeat family. As to quaternary structure, homotrimer.

The protein localises to the cytoplasm. The catalysed reaction is (S)-2,3,4,5-tetrahydrodipicolinate + succinyl-CoA + H2O = (S)-2-succinylamino-6-oxoheptanedioate + CoA. The protein operates within amino-acid biosynthesis; L-lysine biosynthesis via DAP pathway; LL-2,6-diaminopimelate from (S)-tetrahydrodipicolinate (succinylase route): step 1/3. The polypeptide is 2,3,4,5-tetrahydropyridine-2,6-dicarboxylate N-succinyltransferase (Neisseria gonorrhoeae (strain ATCC 700825 / FA 1090)).